The chain runs to 629 residues: 1-deoxy-D-xylulose-5-phosphate synthase (629 aa).

Residues His-72 and 113–115 each bind thiamine diphosphate; that span reads GHA. Asp-144 is a Mg(2+) binding site. Residues 145-146, Asn-174, Tyr-287, and Glu-370 each bind thiamine diphosphate; that span reads GA. Residue Asn-174 participates in Mg(2+) binding.

This sequence belongs to the transketolase family. DXPS subfamily. In terms of assembly, homodimer. The cofactor is Mg(2+). Thiamine diphosphate is required as a cofactor.

It carries out the reaction D-glyceraldehyde 3-phosphate + pyruvate + H(+) = 1-deoxy-D-xylulose 5-phosphate + CO2. It functions in the pathway metabolic intermediate biosynthesis; 1-deoxy-D-xylulose 5-phosphate biosynthesis; 1-deoxy-D-xylulose 5-phosphate from D-glyceraldehyde 3-phosphate and pyruvate: step 1/1. Catalyzes the acyloin condensation reaction between C atoms 2 and 3 of pyruvate and glyceraldehyde 3-phosphate to yield 1-deoxy-D-xylulose-5-phosphate (DXP). The protein is 1-deoxy-D-xylulose-5-phosphate synthase of Prochlorococcus marinus (strain AS9601).